The following is a 106-amino-acid chain: Putative membrane protein insertion efficiency factor (106 aa).

This sequence belongs to the UPF0161 family.

The protein resides in the cell inner membrane. Functionally, could be involved in insertion of integral membrane proteins into the membrane. The protein is Putative membrane protein insertion efficiency factor of Acinetobacter baumannii (strain SDF).